The chain runs to 567 residues: Dihydrolipoyllysine-residue acetyltransferase component of pyruvate dehydrogenase complex (567 aa).

Lipoyl-binding domains lie at 2–75 and 108–181; these read SKQI…LVLE and IVEV…MRFE. N6-lipoyllysine occurs at positions 41 and 147. The segment covering 192–238 has biased composition (low complexity); that stretch reads SAPASTSAPQTAAPATTAQAPQAAAPDTTAQAPQAAAPDTTAQAAQS. The segment at 192–249 is disordered; that stretch reads SAPASTSAPQTAAPATTAQAPQAAAPDTTAQAPQAAAPDTTAQAAQSNNNVSGLSQEQ. The segment covering 239-249 has biased composition (polar residues); sequence NNNVSGLSQEQ. Residues 258–295 enclose the Peripheral subunit-binding (PSBD) domain; it reads HATPVIRRLAREFGVNLDKVKGTGRKGRIVKEDIEAYV. Active-site residues include Cys484, His540, and Asp544.

This sequence belongs to the 2-oxoacid dehydrogenase family. As to quaternary structure, forms a 24-polypeptide structural core with octahedral symmetry. Requires (R)-lipoate as cofactor.

It carries out the reaction N(6)-[(R)-dihydrolipoyl]-L-lysyl-[protein] + acetyl-CoA = N(6)-[(R)-S(8)-acetyldihydrolipoyl]-L-lysyl-[protein] + CoA. The pyruvate dehydrogenase complex catalyzes the overall conversion of pyruvate to acetyl-CoA and CO(2). It contains multiple copies of three enzymatic components: pyruvate dehydrogenase (E1), dihydrolipoamide acetyltransferase (E2) and lipoamide dehydrogenase (E3). The sequence is that of Dihydrolipoyllysine-residue acetyltransferase component of pyruvate dehydrogenase complex (aceF) from Haemophilus influenzae (strain ATCC 51907 / DSM 11121 / KW20 / Rd).